A 168-amino-acid chain; its full sequence is uncharacterized protein (168 aa).

Residues 23-47 (LFARASIIGVALLLSACATVPMASV) form a helical membrane-spanning segment.

It localises to the membrane. This is an uncharacterized protein from Haemophilus influenzae (strain ATCC 51907 / DSM 11121 / KW20 / Rd).